Here is a 346-residue protein sequence, read N- to C-terminus: PPE family protein PPE17 (346 aa).

The interval 6-159 is PPE; sequence FPPEFNSLNI…LYATMAAAAA (154 aa).

Belongs to the mycobacterial PPE family. Interacts with LRR motifs 15-20 of host Toll-like receptor 2 (TLR2).

The protein localises to the secreted. It localises to the cell wall. Its subcellular location is the cell surface. In terms of biological role, induces pro-inflammatory responses. Induces host TLR1/2 heterodimerization, which causes an increased recruitment of IRAK1, MYD88, and protein kinase C epsilon (PRKCE) to the downstream TLR-signaling complex that translocates PRKCE into the nucleus in an IRAK1-dependent manner. PRKCE-mediated phosphorylation allowed the nuclear IRAK3 to be exported to the cytoplasm, leading to increased activation of ERK1/2, stabilization of MAPK phosphatase 1 (MKP1), and induction of TNF-alpha with concomitant down-regulation of MAP kinase p38. Functionally, during M.tuberculosis and HIV-1 co-infection, can stimulate transcription from the long terminal repeat (LTR) of HIV-1 in monocyte/macrophage cells. Interaction with human TLR2 activates the NF-kappa-B transcription factor, which binds to the promoter region of the HIV-1 and induces HIV-1 gene expression. This chain is PPE family protein PPE17 (PPE17), found in Mycobacterium tuberculosis (strain ATCC 25618 / H37Rv).